We begin with the raw amino-acid sequence, 60 residues long: Metallothionein (60 aa).

The beta stretch occupies residues 1–28; that stretch reads MDPCECSKTGKCSCGGSCTCTNCSCTSC. Residues cysteine 4, cysteine 6, cysteine 12, cysteine 14, cysteine 18, cysteine 20, cysteine 23, cysteine 25, cysteine 28, cysteine 32, cysteine 33, cysteine 35, cysteine 36, cysteine 40, cysteine 43, cysteine 47, cysteine 49, cysteine 54, cysteine 58, and cysteine 59 each coordinate a divalent metal cation. The interval 29–60 is alpha; that stretch reads KKSCCPCCPSGCSKCASGCVCKGKTCDTSCCQ.

It belongs to the metallothionein superfamily. Type 1 family.

Metallothioneins have a high content of cysteine residues that bind various heavy metals. The polypeptide is Metallothionein (mt) (Chelon auratus (Golden grey mullet)).